Reading from the N-terminus, the 147-residue chain is Putative cystatin-9-like protein CST9LP1 (147 aa).

An N-terminal signal peptide occupies residues 1–28; that stretch reads MWSLPPSRALSCAPLLLLFSFQFLVTYA. The cysteines at positions 98 and 108 are disulfide-linked. Residues N117 and N139 are each glycosylated (N-linked (GlcNAc...) asparagine). C122 and C142 are joined by a disulfide.

Belongs to the cystatin family.

It localises to the secreted. The polypeptide is Putative cystatin-9-like protein CST9LP1 (CST9LP1) (Homo sapiens (Human)).